Reading from the N-terminus, the 633-residue chain is MGIASHSAFRERESSPTGASLDASPRPWDKGLSGREPPRHVQVRPRSAVLNMLRRLDRIRFRGHKREDLLDLAESPNASDTECGDEIPLKTPRPSPRDSEELRDPAGPGTLIMAAGVQDFNRTEFDRLNEIKGHLEIALLEKHFLQEELRKLREETNSEMLRQELDRERQRRIELEQKMQEVLKARSEEQPAQPQQPPKGQSQASNGTGTERRSQGLASRVQKWFYERFGEYIEDFRFQPEENTVETEEPLSARRLTENMRRLKRGAKPVTNFVKNLSALSDWYSIYTSAIAFTVYMNAVWHGWAIPMFLFLAILRLSLNYLIARGWRIQWSIVPEVSEAVEPAKEDLTVSEKFQLVLDVAQKAQNLFGKMADILEKIKNLFMWVQPETTQKLYVALWAAFLASCFFPYRLVGLAVGLYAGIKFFLIDFIFKRCPRLRAKYDTPYIIWRSLPTDPQLKERAGATVSRRLQTASSRSYVSSAPAGLSKDEDAGRFHSTKKGNFHEIFNLTENERPLAVCENGWRCCLINRDRKMPTDYIRNGVLYVTENYLCFESSKSGSSKRNKVIKLMDITDIQKYKVLSVLPGSGMGIAVSTPSTQKPLVFGAMVHRDEAFETIFSQYVKITSAAASGGDS.

Disordered regions lie at residues 1-46 (MGIA…VRPR), 72-109 (LAES…AGPG), and 182-216 (VLKA…RSQG). Residues 27-39 (PWDKGLSGREPPR) are compositionally biased toward basic and acidic residues. Residues Ser75 and Ser79 each carry the phosphoserine modification. Positions 95-104 (SPRDSEELRD) are enriched in basic and acidic residues. The stretch at 134–190 (HLEIALLEKHFLQEELRKLREETNSEMLRQELDRERQRRIELEQKMQEVLKARSEEQ) forms a coiled coil. Residues 190–205 (QPAQPQQPPKGQSQAS) are compositionally biased toward low complexity. 3 helical membrane-spanning segments follow: residues 295-315 (VYMN…LAIL), 389-409 (TTQK…FFPY), and 411-431 (LVGL…DFIF). The GRAM domain occupies 500–578 (GNFHEIFNLT…MDITDIQKYK (79 aa)).

Interacts with RTN4 (isoform B).

The protein localises to the mitochondrion membrane. The protein resides in the endoplasmic reticulum membrane. Functionally, plays a role as a mediator of E2F1-induced apoptosis in the absence of p53/TP53. Inhibits TLR9 response to nucelic acids and regulates TLR9-mediated innate immune response. The polypeptide is GRAM domain-containing protein 4 (Mus musculus (Mouse)).